A 240-amino-acid chain; its full sequence is Methylthioribulose-1-phosphate dehydratase (240 aa).

A substrate-binding site is contributed by cysteine 99. Zn(2+) is bound by residues histidine 116 and histidine 118. Glutamate 145 functions as the Proton donor/acceptor in the catalytic mechanism. Zn(2+) is bound at residue histidine 201.

The protein belongs to the aldolase class II family. MtnB subfamily. Requires Zn(2+) as cofactor.

It is found in the cytoplasm. It carries out the reaction 5-(methylsulfanyl)-D-ribulose 1-phosphate = 5-methylsulfanyl-2,3-dioxopentyl phosphate + H2O. It participates in amino-acid biosynthesis; L-methionine biosynthesis via salvage pathway; L-methionine from S-methyl-5-thio-alpha-D-ribose 1-phosphate: step 2/6. Catalyzes the dehydration of methylthioribulose-1-phosphate (MTRu-1-P) into 2,3-diketo-5-methylthiopentyl-1-phosphate (DK-MTP-1-P). This Paracoccidioides lutzii (strain ATCC MYA-826 / Pb01) (Paracoccidioides brasiliensis) protein is Methylthioribulose-1-phosphate dehydratase.